The sequence spans 327 residues: Beta-ketoacyl-[acyl-carrier-protein] synthase III (327 aa).

Catalysis depends on residues Cys-114 and His-254. Residues 255–259 (QANQR) form an ACP-binding region. Asn-284 is an active-site residue.

Belongs to the thiolase-like superfamily. FabH family. As to quaternary structure, homodimer.

The protein localises to the cytoplasm. The catalysed reaction is malonyl-[ACP] + acetyl-CoA + H(+) = 3-oxobutanoyl-[ACP] + CO2 + CoA. The protein operates within lipid metabolism; fatty acid biosynthesis. Its function is as follows. Catalyzes the condensation reaction of fatty acid synthesis by the addition to an acyl acceptor of two carbons from malonyl-ACP. Catalyzes the first condensation reaction which initiates fatty acid synthesis and may therefore play a role in governing the total rate of fatty acid production. Possesses both acetoacetyl-ACP synthase and acetyl transacylase activities. Its substrate specificity determines the biosynthesis of branched-chain and/or straight-chain of fatty acids. This Levilactobacillus brevis (strain ATCC 367 / BCRC 12310 / CIP 105137 / JCM 1170 / LMG 11437 / NCIMB 947 / NCTC 947) (Lactobacillus brevis) protein is Beta-ketoacyl-[acyl-carrier-protein] synthase III.